Here is a 171-residue protein sequence, read N- to C-terminus: MDYFTLFGLPARYQIDTQALSLRFQDLQRQYHPDKFANGTQAQQLAAVQQSATINQAWQTLRHPLTRAEYLLSLHGFDLASEQHTVRDTAFLMEQLTLREELDDIEQSKDDARLESFIKRVQKMFDARLQQLVEQLDNAAWDTAADTVRKLRFLDKLRSSAEQLEEKLLDF.

One can recognise a J domain in the interval 2–74; sequence DYFTLFGLPA…LTRAEYLLSL (73 aa).

Belongs to the HscB family. Interacts with HscA and stimulates its ATPase activity. Interacts with IscU.

Its function is as follows. Co-chaperone involved in the maturation of iron-sulfur cluster-containing proteins. Seems to help targeting proteins to be folded toward HscA. This is Co-chaperone protein HscB from Salmonella heidelberg (strain SL476).